The sequence spans 341 residues: MSKSGVLLLNLGGPETQADVQPFLYNLFADPELIRLPFPFLQRAFAWAISTLRAPKSRRNYAAIGGGSPLRRITAAQAQALQAQLVAAGYDVPVYVAMRYWHPLIESVVQQIKSDGITRLVVLPLYPQYSISTTGSSFKLLDRLWAEDPELARIERRQICSWYDQPQYVQAMARAIREQLDAFEDPAGVHVLFSAHGIPESYVTQAGDPYQQEMEACVQLIWREVGRPNRHTLSYQSRVGSVRWLQPYTETVIPELGACGVRQLLVVPISFVSEHIETLQEIDIEYRELAHQAGIREFRRVPALNADPLFIAGLVALVRPHLLTSAPAFVPAAVGGSLLER.

Residues His196 and Glu277 each coordinate Fe cation.

The protein belongs to the ferrochelatase family.

The protein resides in the cytoplasm. It carries out the reaction heme b + 2 H(+) = protoporphyrin IX + Fe(2+). It functions in the pathway porphyrin-containing compound metabolism; protoheme biosynthesis; protoheme from protoporphyrin-IX: step 1/1. Catalyzes the ferrous insertion into protoporphyrin IX. The chain is Ferrochelatase from Synechococcus sp. (strain JA-3-3Ab) (Cyanobacteria bacterium Yellowstone A-Prime).